Reading from the N-terminus, the 1295-residue chain is MNEVNDFDAIRISLASPDQIRSWSYGEVTKPETINYRTLKPERDGLFCERIFGPIKDFECACGKYKRIRYKGIICDKCGVEIARAKVRRERMGHIELACPVGHIWFTRGIPSRVGLLLNLSTRSLERIIYYSHFIITGVNDEAREKAIKDLEVISSQRVADKGSEVDTRVAQMEAEDATVEAINQVRRDFSTEREQMEEDIQLLIDQLKDLQIGNLLTENQYYELKQRFSNVFEASMGAEALLKLLSYIDMDKERSKLIQETRSTSGQRRKKAGKQLQLVEAFRRSSNKPEWMIMTVLPVLPPDLRPMVQLDGGRFATSDLNDLYRRVINRNNRLQHLMEIGAPEIIIRNEKRMLQEAVDSLIDNGRRGKSVAVNGDHKAKSLSDLLRGKQGRFRQNLLGKRVDYSGRSVIVVGPSLKLSQCGLPRRMALELFKPFVMHRLVRDGLAPNIKSARRLVERARPEVYDILEEVVKERPVMLNRAPTLHRLSIQAFEPVLIDGSALRLHPLVCSAFNADFDGDQMAVHVPLSKAAVKEARETMLSIHNMMLPSSGEPVVSPSLDMVFGCYYLTTTRPGAKGEGKIFSDFEEAKHYYEMGIIDLRAIIKVRDGKGNMLETTTGRIIFNDVLPKEVEFQNMDIPKSAIKKIIGRCYKILSSQDMAVMLDKIKQLGFKYATSSGISIAMSDISVPREKAKLVAAADERTAISEGQFARGLITEDERYNSIIETWMETTDRITDAIQAGFDKQGSVYMMANSGAKGNISQIRQMAGLRGLMTNPSGRIIDFPIKSSLREGLTTLEYFISTHGARKGLADTALRTSGSGYLTRRLIDVTQDVIILQEDCGTSNGTWIVEPKEKGMLPPLVDRVLGRWAAHNVVHPQTGEIIVGNNEEIDEAKAKAIGEAGITEVFVRSPLTCEATHGMCRRCYGRDLGRVRLVDMNTAVGIIAAQSIGEPGTQLTLRTFHTGGVVGVDITTGLPRVEELFEARPPKVQSIISEIDGEAEVIENENGRHIRIFSDEVYQDEYELPSGWKTQVQSGQWVDSGMVLASPEMEGKSKAVVQSDQNVVARVAGEVSVDGSLITIKYSESEEREYAIPAAMQIKVKTGDSVRAGQQLTDGSINPQDILSILGRDAVQKYLVEEVQKVYYSQGVHINDKHIEVIARQMLIKVRIDSSGDTDLVPGELVDKFRYEDINAKVLAEGGEPATAHTVLMGITRASLSTESWLAAASFQETTRVLTDAAIYGKVDKLSGLKENVIIGKLIPAQCKSCKEATVERAERIAAAAAAPAVSTLPENCL.

Zn(2+) is bound by residues Cys-60, Cys-62, Cys-75, and Cys-78. Asp-516, Asp-518, and Asp-520 together coordinate Mg(2+). Positions 841, 914, 921, and 924 each coordinate Zn(2+).

The protein belongs to the RNA polymerase beta' chain family. The RNAP catalytic core consists of 2 alpha, 1 beta, 1 beta' and 1 omega subunit. When a sigma factor is associated with the core the holoenzyme is formed, which can initiate transcription. Mg(2+) is required as a cofactor. The cofactor is Zn(2+).

The catalysed reaction is RNA(n) + a ribonucleoside 5'-triphosphate = RNA(n+1) + diphosphate. DNA-dependent RNA polymerase catalyzes the transcription of DNA into RNA using the four ribonucleoside triphosphates as substrates. This Dehalococcoides mccartyi (strain ATCC BAA-2266 / KCTC 15142 / 195) (Dehalococcoides ethenogenes (strain 195)) protein is DNA-directed RNA polymerase subunit beta'.